Reading from the N-terminus, the 512-residue chain is ATP synthase subunit alpha (512 aa).

169-176 provides a ligand contact to ATP; it reads GDRKTGKT.

The protein belongs to the ATPase alpha/beta chains family. As to quaternary structure, F-type ATPases have 2 components, CF(1) - the catalytic core - and CF(0) - the membrane proton channel. CF(1) has five subunits: alpha(3), beta(3), gamma(1), delta(1), epsilon(1). CF(0) has three main subunits: a(1), b(2) and c(9-12). The alpha and beta chains form an alternating ring which encloses part of the gamma chain. CF(1) is attached to CF(0) by a central stalk formed by the gamma and epsilon chains, while a peripheral stalk is formed by the delta and b chains.

The protein resides in the cell membrane. It catalyses the reaction ATP + H2O + 4 H(+)(in) = ADP + phosphate + 5 H(+)(out). Functionally, produces ATP from ADP in the presence of a proton gradient across the membrane. The alpha chain is a regulatory subunit. The sequence is that of ATP synthase subunit alpha from Limosilactobacillus fermentum (strain NBRC 3956 / LMG 18251) (Lactobacillus fermentum).